We begin with the raw amino-acid sequence, 701 residues long: Potassium-transporting ATPase ATP-binding subunit 1 (701 aa).

Residues 1–26 form a disordered region; sequence MNPVAPTRKVKPPRNRPSDRRQARKK. The next 4 helical transmembrane spans lie at 57 to 77, 90 to 110, 241 to 261, and 278 to 298; these read MFVV…PDLF, GLLT…EAVA, VALT…IATL, and IALL…AIGI. Residue Asp329 is the 4-aspartylphosphate intermediate of the active site. Residues Asp366, Glu370, 397–404, and Lys416 contribute to the ATP site; that span reads FSAKTRMS. Mg(2+) is bound by residues Asp539 and Asp543. Transmembrane regions (helical) follow at residues 599 to 619, 635 to 655, and 681 to 701; these read FSIA…FAAA, AVLS…PLAL, and VIAP…VGLA.

This sequence belongs to the cation transport ATPase (P-type) (TC 3.A.3) family. Type IA subfamily. In terms of assembly, the system is composed of three essential subunits: KdpA, KdpB and KdpC.

Its subcellular location is the cell inner membrane. The catalysed reaction is K(+)(out) + ATP + H2O = K(+)(in) + ADP + phosphate + H(+). Functionally, part of the high-affinity ATP-driven potassium transport (or Kdp) system, which catalyzes the hydrolysis of ATP coupled with the electrogenic transport of potassium into the cytoplasm. This subunit is responsible for energy coupling to the transport system and for the release of the potassium ions to the cytoplasm. In Nostoc sp. (strain PCC 7120 / SAG 25.82 / UTEX 2576), this protein is Potassium-transporting ATPase ATP-binding subunit 1.